A 293-amino-acid chain; its full sequence is Bifunctional protein FolD (293 aa).

Residues 165–167 (GRS), T194, and V235 each bind NADP(+).

This sequence belongs to the tetrahydrofolate dehydrogenase/cyclohydrolase family. In terms of assembly, homodimer.

It carries out the reaction (6R)-5,10-methylene-5,6,7,8-tetrahydrofolate + NADP(+) = (6R)-5,10-methenyltetrahydrofolate + NADPH. It catalyses the reaction (6R)-5,10-methenyltetrahydrofolate + H2O = (6R)-10-formyltetrahydrofolate + H(+). It functions in the pathway one-carbon metabolism; tetrahydrofolate interconversion. Its function is as follows. Catalyzes the oxidation of 5,10-methylenetetrahydrofolate to 5,10-methenyltetrahydrofolate and then the hydrolysis of 5,10-methenyltetrahydrofolate to 10-formyltetrahydrofolate. The polypeptide is Bifunctional protein FolD (Syntrophus aciditrophicus (strain SB)).